The following is a 551-amino-acid chain: Hydroxymethylpyrimidine/phosphomethylpyrimidine kinase THI20 (551 aa).

Gln-64 provides a ligand contact to 4-amino-5-hydroxymethyl-2-methylpyrimidine. The active-site Nucleophile is Cys-468. The active-site Proton donor is Glu-540.

It in the N-terminal section; belongs to the ThiD family. The protein in the C-terminal section; belongs to the thiaminase-2 family.

It catalyses the reaction 4-amino-5-hydroxymethyl-2-methylpyrimidine + ATP = 4-amino-2-methyl-5-(phosphooxymethyl)pyrimidine + ADP + H(+). The enzyme catalyses 4-amino-2-methyl-5-(phosphooxymethyl)pyrimidine + ATP = 4-amino-2-methyl-5-(diphosphooxymethyl)pyrimidine + ADP. The catalysed reaction is thiamine + H2O = 5-(2-hydroxyethyl)-4-methylthiazole + 4-amino-5-hydroxymethyl-2-methylpyrimidine + H(+). It participates in cofactor biosynthesis; thiamine diphosphate biosynthesis; 4-amino-2-methyl-5-diphosphomethylpyrimidine from 5-amino-1-(5-phospho-D-ribosyl)imidazole: step 2/3. Its pathway is cofactor biosynthesis; thiamine diphosphate biosynthesis; 4-amino-2-methyl-5-diphosphomethylpyrimidine from 5-amino-1-(5-phospho-D-ribosyl)imidazole: step 3/3. Trifunctional protein with both thiamine biosynthetic and degradative activity. Within the thiamine biosynthesis pathway, catalyzes the phosphorylation of hydroxymethylpyrimidine (HMP) to hydroxymethylpyrimidine phosphate (HMP-P), as well as of HMP-P to HMP-PP. Also has thiaminase II activity and degrades thiamine using water as the nucleophile, resulting only in the formation of HMP (4-amino-2-methyl-5-hydroxymethylpyrimidine) and Thz (4-methyl-5-thiazole ethanol). The chain is Hydroxymethylpyrimidine/phosphomethylpyrimidine kinase THI20 from Saccharomyces cerevisiae (strain ATCC 204508 / S288c) (Baker's yeast).